A 393-amino-acid polypeptide reads, in one-letter code: Cell division protein FtsZ 2 (393 aa).

Positions 1–28 (MQDIVQDALDNAEAEQREMDGDGDGDEF) are disordered. GTP-binding positions include 40–44 (GAGNN), 127–129 (GTG), glutamate 158, arginine 161, and aspartate 204. A disordered region spans residues 339–393 (GPSTQKQADKSRRELQDVDSKQRAADDAGAGGFGGAHSDGGQDEVEQENGLDVIR). Residues 345–364 (QADKSRRELQDVDSKQRAAD) are compositionally biased toward basic and acidic residues. Residues 367-376 (GAGGFGGAHS) are compositionally biased toward gly residues.

This sequence belongs to the FtsZ family. As to quaternary structure, homodimer. Polymerizes to form a dynamic ring structure in a strictly GTP-dependent manner. Interacts directly with several other division proteins.

The protein resides in the cytoplasm. Essential cell division protein that forms a contractile ring structure (Z ring) at the future cell division site. The regulation of the ring assembly controls the timing and the location of cell division. One of the functions of the FtsZ ring is to recruit other cell division proteins to the septum to produce a new cell wall between the dividing cells. Binds GTP and shows GTPase activity. Overexpression causes significant changes in cell morphology. This Halobacterium salinarum (strain ATCC 29341 / DSM 671 / R1) protein is Cell division protein FtsZ 2.